The primary structure comprises 347 residues: Phosphate acyltransferase (347 aa).

The protein belongs to the PlsX family. As to quaternary structure, homodimer. Probably interacts with PlsY.

It is found in the cytoplasm. The enzyme catalyses a fatty acyl-[ACP] + phosphate = an acyl phosphate + holo-[ACP]. It functions in the pathway lipid metabolism; phospholipid metabolism. Catalyzes the reversible formation of acyl-phosphate (acyl-PO(4)) from acyl-[acyl-carrier-protein] (acyl-ACP). This enzyme utilizes acyl-ACP as fatty acyl donor, but not acyl-CoA. In Anaplasma marginale (strain St. Maries), this protein is Phosphate acyltransferase.